The sequence spans 334 residues: B3 domain-containing protein LOC_Os12g40090 (334 aa).

Positions 5–102 (RIRFFRLMTG…SFDVLIFDAS (98 aa)) form a DNA-binding region, TF-B3 1. A disordered region spans residues 142 to 178 (TSTPSVLIGSPHKASTSKKLSGKTKTNPRKEPEDPNC). A compositionally biased stretch (low complexity) spans 154 to 166 (KASTSKKLSGKTK). The segment at residues 227 to 326 (FVVVLQTAHV…TMTVHVIGKA (100 aa)) is a DNA-binding region (TF-B3 2).

It localises to the nucleus. In Oryza sativa subsp. japonica (Rice), this protein is B3 domain-containing protein LOC_Os12g40090.